The sequence spans 378 residues: Chaperone protein DnaJ 2 (378 aa).

The 65-residue stretch at 4–68 folds into the J domain; that stretch reads DYYGLLGVSR…EKRRIVDLGG (65 aa). The CR-type zinc finger occupies 128 to 210; the sequence is GVTKQVTVDT…CVGDGRVRAR (83 aa). Residues Cys141, Cys144, Cys158, Cys161, Cys184, Cys187, Cys198, and Cys201 each coordinate Zn(2+). 4 CXXCXGXG motif repeats span residues 141 to 148, 158 to 165, 184 to 191, and 198 to 205; these read CDRCQGKG, CDTCGGRG, CPTCRGVG, and CCQCVGDG.

It belongs to the DnaJ family. Homodimer. It depends on Zn(2+) as a cofactor.

The protein resides in the cytoplasm. In terms of biological role, participates actively in the response to hyperosmotic and heat shock by preventing the aggregation of stress-denatured proteins and by disaggregating proteins, also in an autonomous, DnaK-independent fashion. Unfolded proteins bind initially to DnaJ; upon interaction with the DnaJ-bound protein, DnaK hydrolyzes its bound ATP, resulting in the formation of a stable complex. GrpE releases ADP from DnaK; ATP binding to DnaK triggers the release of the substrate protein, thus completing the reaction cycle. Several rounds of ATP-dependent interactions between DnaJ, DnaK and GrpE are required for fully efficient folding. Also involved, together with DnaK and GrpE, in the DNA replication of plasmids through activation of initiation proteins. In Mycobacterium leprae (strain TN), this protein is Chaperone protein DnaJ 2.